Reading from the N-terminus, the 208-residue chain is Uracil phosphoribosyltransferase (208 aa).

5-phospho-alpha-D-ribose 1-diphosphate is bound by residues Arg-78, Arg-103, and 130 to 138 (DPMLATGGS). Uracil-binding positions include Ile-193 and 198–200 (GDA). Asp-199 is a binding site for 5-phospho-alpha-D-ribose 1-diphosphate.

Belongs to the UPRTase family. The cofactor is Mg(2+).

It catalyses the reaction UMP + diphosphate = 5-phospho-alpha-D-ribose 1-diphosphate + uracil. Its pathway is pyrimidine metabolism; UMP biosynthesis via salvage pathway; UMP from uracil: step 1/1. With respect to regulation, allosterically activated by GTP. Functionally, catalyzes the conversion of uracil and 5-phospho-alpha-D-ribose 1-diphosphate (PRPP) to UMP and diphosphate. This Salmonella agona (strain SL483) protein is Uracil phosphoribosyltransferase.